We begin with the raw amino-acid sequence, 821 residues long: Elongator complex protein 2 (821 aa).

13 WD repeats span residues Gly-56–Ser-100, Gly-105–Leu-152, Gly-160–Met-200, Gly-205–Glu-246, Gly-280–Leu-328, Gly-338–Trp-377, Gly-385–Gln-424, Ile-435–Phe-473, Gly-563–Ser-607, Tyr-610–Phe-649, Val-665–Met-704, Asp-716–Lys-760, and Ser-773–Leu-821.

The protein belongs to the WD repeat ELP2 family. As to quaternary structure, component of the elongator complex which consists of ELP1, ELP2, ELP3, ELP4, ELP5 and ELP6. Interacts with STAT3 and JAKs.

It is found in the cytoplasm. The protein resides in the nucleus. It functions in the pathway tRNA modification; 5-methoxycarbonylmethyl-2-thiouridine-tRNA biosynthesis. In terms of biological role, component of the elongator complex which is required for multiple tRNA modifications, including mcm5U (5-methoxycarbonylmethyl uridine), mcm5s2U (5-methoxycarbonylmethyl-2-thiouridine), and ncm5U (5-carbamoylmethyl uridine). The elongator complex catalyzes the formation of carboxymethyluridine in the wobble base at position 34 in tRNAs. The sequence is that of Elongator complex protein 2 (Elp2) from Rattus norvegicus (Rat).